We begin with the raw amino-acid sequence, 1079 residues long: Isoleucine--tRNA ligase (1079 aa).

Residues 53–63 (PFANGLPHYGH) carry the 'HIGH' region motif. A 'KMSKS' region motif is present at residues 611-615 (KLSKR). An ATP-binding site is contributed by K614.

It belongs to the class-I aminoacyl-tRNA synthetase family. IleS type 2 subfamily. As to quaternary structure, monomer. The cofactor is Zn(2+).

It localises to the cytoplasm. The catalysed reaction is tRNA(Ile) + L-isoleucine + ATP = L-isoleucyl-tRNA(Ile) + AMP + diphosphate. In terms of biological role, catalyzes the attachment of isoleucine to tRNA(Ile). As IleRS can inadvertently accommodate and process structurally similar amino acids such as valine, to avoid such errors it has two additional distinct tRNA(Ile)-dependent editing activities. One activity is designated as 'pretransfer' editing and involves the hydrolysis of activated Val-AMP. The other activity is designated 'posttransfer' editing and involves deacylation of mischarged Val-tRNA(Ile). This is Isoleucine--tRNA ligase from Rickettsia canadensis (strain McKiel).